The chain runs to 509 residues: Citrate synthase 3, peroxisomal (509 aa).

Active-site residues include H319, H358, and D414. A disordered region spans residues 485-509; sequence SKESDKLGQVATSNASRRRLAGSSV. Residues 500–509 show a composition bias toward basic residues; it reads SRRRLAGSSV.

The protein belongs to the citrate synthase family. In terms of tissue distribution, widely expressed. Expressed throughout the shoot. Expressed in flower, silique, stem, cauline leaf, young leaf, mature leaf and senescent leaf.

Its subcellular location is the peroxisome. The catalysed reaction is oxaloacetate + acetyl-CoA + H2O = citrate + CoA + H(+). It participates in carbohydrate metabolism; tricarboxylic acid cycle; isocitrate from oxaloacetate: step 1/2. Functionally, peroxisomal citrate synthase required for the fatty acid respiration in seedlings, citrate being exported from peroxisomes into mitochondria during respiration of triacylglycerol (TAG). Indeed, complete respiration requires the transfer of carbon in the form of citrate from the peroxisome to the mitochondria. The protein is Citrate synthase 3, peroxisomal (CSY3) of Arabidopsis thaliana (Mouse-ear cress).